The sequence spans 519 residues: Cell division cycle protein 20 homolog B (519 aa).

Residues 79–98 (QSQTRALSSDSFGEEQSTTY) are compositionally biased toward polar residues. The tract at residues 79–133 (QSQTRALSSDSFGEEQSTTYLPEASGSVLKTPPEKETLTLGSRKEQLKTPSKGIS) is disordered. The segment covering 110–125 (PPEKETLTLGSRKEQL) has biased composition (basic and acidic residues). WD repeat units lie at residues 229-266 (RNDY…GIEN), 271-310 (LTCN…RLRN), 311-341 (MLGH…YHHD), 353-392 (RHKQ…SAQG), 399-441 (TQST…SIQT), 443-484 (STNS…RSGG), and 487-519 (GHRG…WNCY).

The protein belongs to the WD repeat CDC20/Fizzy family. Expressed in multiciliated cells (MCCs).

The protein localises to the cytoplasm. In terms of biological role, protein regulator of centriole-deuterosome disengagement and subsequently participates in the ciliogenesis in multiciliated cells (MCCs). The sequence is that of Cell division cycle protein 20 homolog B from Homo sapiens (Human).